The chain runs to 565 residues: NAD-dependent malic enzyme (565 aa).

The Proton donor role is filled by Tyr-104. Arg-157 is an NAD(+) binding site. The active-site Proton acceptor is the Lys-175. The a divalent metal cation site is built by Glu-246, Asp-247, and Asp-270. NAD(+) contacts are provided by Asp-270 and Asn-418.

This sequence belongs to the malic enzymes family. As to quaternary structure, homotetramer. Requires Mg(2+) as cofactor. It depends on Mn(2+) as a cofactor.

The enzyme catalyses (S)-malate + NAD(+) = pyruvate + CO2 + NADH. It carries out the reaction oxaloacetate + H(+) = pyruvate + CO2. In Yersinia pseudotuberculosis serotype O:1b (strain IP 31758), this protein is NAD-dependent malic enzyme.